We begin with the raw amino-acid sequence, 209 residues long: Protein GrpE (209 aa).

The protein belongs to the GrpE family. In terms of assembly, homodimer.

Its subcellular location is the cytoplasm. In terms of biological role, participates actively in the response to hyperosmotic and heat shock by preventing the aggregation of stress-denatured proteins, in association with DnaK and GrpE. It is the nucleotide exchange factor for DnaK and may function as a thermosensor. Unfolded proteins bind initially to DnaJ; upon interaction with the DnaJ-bound protein, DnaK hydrolyzes its bound ATP, resulting in the formation of a stable complex. GrpE releases ADP from DnaK; ATP binding to DnaK triggers the release of the substrate protein, thus completing the reaction cycle. Several rounds of ATP-dependent interactions between DnaJ, DnaK and GrpE are required for fully efficient folding. The sequence is that of Protein GrpE from Colwellia psychrerythraea (strain 34H / ATCC BAA-681) (Vibrio psychroerythus).